A 273-amino-acid polypeptide reads, in one-letter code: NH(3)-dependent NAD(+) synthetase (273 aa).

Position 45–52 (45–52) interacts with ATP; it reads GISGGQDS. A Mg(2+)-binding site is contributed by aspartate 51. Arginine 139 contacts deamido-NAD(+). An ATP-binding site is contributed by threonine 159. Glutamate 164 serves as a coordination point for Mg(2+). The deamido-NAD(+) site is built by lysine 172 and aspartate 179. ATP-binding residues include lysine 188 and threonine 210. 259-260 serves as a coordination point for deamido-NAD(+); the sequence is HK.

It belongs to the NAD synthetase family. Homodimer.

The catalysed reaction is deamido-NAD(+) + NH4(+) + ATP = AMP + diphosphate + NAD(+) + H(+). The protein operates within cofactor biosynthesis; NAD(+) biosynthesis; NAD(+) from deamido-NAD(+) (ammonia route): step 1/1. Its function is as follows. Catalyzes the ATP-dependent amidation of deamido-NAD to form NAD. Uses ammonia as a nitrogen source. The protein is NH(3)-dependent NAD(+) synthetase of Bacillus pumilus (strain SAFR-032).